Consider the following 368-residue polypeptide: Germination protease (368 aa).

Residues Met-1–Asp-16 constitute a propeptide that is removed on maturation.

It belongs to the peptidase A25 family. In terms of assembly, homotetramer. Autoproteolytically processed. The inactive tetrameric zymogen termed p46 autoprocesses to a smaller form termed p41, which is active only during spore germination.

The catalysed reaction is Endopeptidase action with P4 Glu or Asp, P1 preferably Glu &gt; Asp, P1' hydrophobic and P2' Ala.. Functionally, initiates the degradation of small, acid-soluble proteins during spore germination. The protein is Germination protease (gpr) of Bacillus subtilis (strain 168).